Reading from the N-terminus, the 301-residue chain is N-acetylmuramic acid 6-phosphate etherase (301 aa).

In terms of domain architecture, SIS spans 57 to 220 (VVERLRAGGR…STISMVRLGK (164 aa)). E85 (proton donor) is an active-site residue. The active site involves E116.

Belongs to the GCKR-like family. MurNAc-6-P etherase subfamily. In terms of assembly, homodimer.

It carries out the reaction N-acetyl-D-muramate 6-phosphate + H2O = N-acetyl-D-glucosamine 6-phosphate + (R)-lactate. Its pathway is amino-sugar metabolism; N-acetylmuramate degradation. Its function is as follows. Specifically catalyzes the cleavage of the D-lactyl ether substituent of MurNAc 6-phosphate, producing GlcNAc 6-phosphate and D-lactate. The polypeptide is N-acetylmuramic acid 6-phosphate etherase (Rubrobacter xylanophilus (strain DSM 9941 / JCM 11954 / NBRC 16129 / PRD-1)).